Here is a 291-residue protein sequence, read N- to C-terminus: ATP synthase gamma chain (291 aa).

The protein belongs to the ATPase gamma chain family. In terms of assembly, F-type ATPases have 2 components, CF(1) - the catalytic core - and CF(0) - the membrane proton channel. CF(1) has five subunits: alpha(3), beta(3), gamma(1), delta(1), epsilon(1). CF(0) has three main subunits: a, b and c.

The protein resides in the cell membrane. Its function is as follows. Produces ATP from ADP in the presence of a proton gradient across the membrane. The gamma chain is believed to be important in regulating ATPase activity and the flow of protons through the CF(0) complex. This is ATP synthase gamma chain from Streptococcus pyogenes serotype M1.